Reading from the N-terminus, the 121-residue chain is MAKKITATNPRLVKLIEILKQESYKNQAKIWKDIARRLAKPRRRRAEVNLSKINRYTKEGDVVLVPGKVLGAGKLEHKVVVAAFAFSETAKKLIKEAGGEAITIEELIKRNPKGSNVKIMA.

Belongs to the eukaryotic ribosomal protein eL18 family.

This chain is Large ribosomal subunit protein eL18, found in Methanocaldococcus jannaschii (strain ATCC 43067 / DSM 2661 / JAL-1 / JCM 10045 / NBRC 100440) (Methanococcus jannaschii).